The primary structure comprises 669 residues: Elongation factor G 2 (669 aa).

In terms of domain architecture, tr-type G spans 1–276; the sequence is MGIRNIGIMA…SIVDYLPSPF (276 aa). GTP contacts are provided by residues 10–17, 74–78, and 128–131; these read AHIDAGKT, DTPGH, and NKMD.

The protein belongs to the TRAFAC class translation factor GTPase superfamily. Classic translation factor GTPase family. EF-G/EF-2 subfamily.

The protein resides in the cytoplasm. Functionally, catalyzes the GTP-dependent ribosomal translocation step during translation elongation. During this step, the ribosome changes from the pre-translocational (PRE) to the post-translocational (POST) state as the newly formed A-site-bound peptidyl-tRNA and P-site-bound deacylated tRNA move to the P and E sites, respectively. Catalyzes the coordinated movement of the two tRNA molecules, the mRNA and conformational changes in the ribosome. In Borreliella afzelii (strain PKo) (Borrelia afzelii), this protein is Elongation factor G 2 (fusA2).